Consider the following 253-residue polypeptide: Tryptophan synthase alpha chain (253 aa).

Active-site proton acceptor residues include Glu46 and Asp57.

This sequence belongs to the TrpA family. Tetramer of two alpha and two beta chains.

The enzyme catalyses (1S,2R)-1-C-(indol-3-yl)glycerol 3-phosphate + L-serine = D-glyceraldehyde 3-phosphate + L-tryptophan + H2O. Its pathway is amino-acid biosynthesis; L-tryptophan biosynthesis; L-tryptophan from chorismate: step 5/5. In terms of biological role, the alpha subunit is responsible for the aldol cleavage of indoleglycerol phosphate to indole and glyceraldehyde 3-phosphate. This chain is Tryptophan synthase alpha chain, found in Dictyoglomus thermophilum (strain ATCC 35947 / DSM 3960 / H-6-12).